The primary structure comprises 495 residues: Meiosis-specific nuclear structural protein 1 (495 aa).

The interval 1–314 is interaction with BBOF1; the sequence is MGSKRRNLSC…KLEEMLRQRE (314 aa). Positions 28-410 form a coiled coil; the sequence is VQALKNVNSQ…QLEHRRAVEK (383 aa). Phosphotyrosine is present on Tyr-188.

Belongs to the MNS1 family. In terms of assembly, able to form oligomers. Microtubule inner protein component of sperm flagellar doublet microtubules. Interacts with ODAD1. Interacts with BBOF1. Expressed in nasal respiratory epithelium and in the sperm.

Its subcellular location is the nucleus. The protein localises to the cytoplasm. It localises to the cytoskeleton. It is found in the cilium axoneme. The protein resides in the flagellum axoneme. In terms of biological role, microtubule inner protein (MIP) part of the dynein-decorated doublet microtubules (DMTs) in cilia axoneme, which is required for motile cilia beating. May play a role in the control of meiotic division and germ cell differentiation through regulation of pairing and recombination during meiosis. Required for sperm flagella assembly. May play a role in the assembly and function of the outer dynein arm-docking complex (ODA-DC). ODA-DC mediates outer dynein arms (ODA) binding onto the axonemal doublet microtubules. This Homo sapiens (Human) protein is Meiosis-specific nuclear structural protein 1.